Here is a 285-residue protein sequence, read N- to C-terminus: 2-dehydro-3-deoxyphosphooctonate aldolase (285 aa).

The protein belongs to the KdsA family.

Its subcellular location is the cytoplasm. It catalyses the reaction D-arabinose 5-phosphate + phosphoenolpyruvate + H2O = 3-deoxy-alpha-D-manno-2-octulosonate-8-phosphate + phosphate. It functions in the pathway carbohydrate biosynthesis; 3-deoxy-D-manno-octulosonate biosynthesis; 3-deoxy-D-manno-octulosonate from D-ribulose 5-phosphate: step 2/3. The protein operates within bacterial outer membrane biogenesis; lipopolysaccharide biosynthesis. The chain is 2-dehydro-3-deoxyphosphooctonate aldolase from Paracidovorax citrulli (strain AAC00-1) (Acidovorax citrulli).